Consider the following 264-residue polypeptide: Thiazole synthase (264 aa).

K106 serves as the catalytic Schiff-base intermediate with DXP. Residues G167, 193–194 (AG), and 215–216 (NT) each bind 1-deoxy-D-xylulose 5-phosphate.

Belongs to the ThiG family. Homotetramer. Forms heterodimers with either ThiH or ThiS.

It localises to the cytoplasm. It carries out the reaction [ThiS sulfur-carrier protein]-C-terminal-Gly-aminoethanethioate + 2-iminoacetate + 1-deoxy-D-xylulose 5-phosphate = [ThiS sulfur-carrier protein]-C-terminal Gly-Gly + 2-[(2R,5Z)-2-carboxy-4-methylthiazol-5(2H)-ylidene]ethyl phosphate + 2 H2O + H(+). It participates in cofactor biosynthesis; thiamine diphosphate biosynthesis. In terms of biological role, catalyzes the rearrangement of 1-deoxy-D-xylulose 5-phosphate (DXP) to produce the thiazole phosphate moiety of thiamine. Sulfur is provided by the thiocarboxylate moiety of the carrier protein ThiS. In vitro, sulfur can be provided by H(2)S. This is Thiazole synthase from Stenotrophomonas maltophilia (strain R551-3).